The chain runs to 107 residues: Thioredoxin (107 aa).

The Thioredoxin domain occupies 2–107; it reads AGVLKNVTDD…ALLRPGPVPR (106 aa). A disulfide bridge connects residues Cys-33 and Cys-36.

Belongs to the thioredoxin family.

Its function is as follows. Component of the thioredoxin-thioredoxin reductase system. Participates in various redox reactions through the reversible oxidation of its active center dithiol to a disulfide and catalyzes dithiol-disulfide exchange reactions. The polypeptide is Thioredoxin (trxA) (Streptomyces clavuligerus).